The chain runs to 247 residues: Probable transcriptional regulatory protein Dalk_2958 (247 aa).

It belongs to the TACO1 family.

Its subcellular location is the cytoplasm. This is Probable transcriptional regulatory protein Dalk_2958 from Desulfatibacillum aliphaticivorans.